The following is a 247-amino-acid chain: ATP synthase delta chain, chloroplastic (247 aa).

The N-terminal 60 residues, 1–60, are a transit peptide targeting the chloroplast; it reads MAALRLASFTLRPAAAAAASASSGATPAAPRSASFARAARGLPSLRLAPPRRRGDLVRPR.

This sequence belongs to the ATPase delta chain family. In terms of assembly, F-type ATPases have 2 components, CF(1) - the catalytic core - and CF(0) - the membrane proton channel. CF(1) has five subunits: alpha(3), beta(3), gamma(1), delta(1), epsilon(1). CF(0) has three main subunits: a, b and c.

It is found in the plastid. The protein resides in the chloroplast thylakoid membrane. This protein seems to be part of the stalk that links CF(0) to CF(1). It either transmits conformational changes from CF(0) into CF(1) or is implicated in proton conduction. This is ATP synthase delta chain, chloroplastic (ATPD) from Sorghum bicolor (Sorghum).